A 407-amino-acid chain; its full sequence is Phosphopentomutase (407 aa).

Mn(2+) contacts are provided by D10, D306, H311, D347, H348, and H359.

This sequence belongs to the phosphopentomutase family. The cofactor is Mn(2+).

The protein resides in the cytoplasm. It carries out the reaction 2-deoxy-alpha-D-ribose 1-phosphate = 2-deoxy-D-ribose 5-phosphate. It catalyses the reaction alpha-D-ribose 1-phosphate = D-ribose 5-phosphate. The protein operates within carbohydrate degradation; 2-deoxy-D-ribose 1-phosphate degradation; D-glyceraldehyde 3-phosphate and acetaldehyde from 2-deoxy-alpha-D-ribose 1-phosphate: step 1/2. Its function is as follows. Isomerase that catalyzes the conversion of deoxy-ribose 1-phosphate (dRib-1-P) and ribose 1-phosphate (Rib-1-P) to deoxy-ribose 5-phosphate (dRib-5-P) and ribose 5-phosphate (Rib-5-P), respectively. This Pectobacterium atrosepticum (strain SCRI 1043 / ATCC BAA-672) (Erwinia carotovora subsp. atroseptica) protein is Phosphopentomutase.